The chain runs to 155 residues: Transcriptional repressor NrdR (155 aa).

Residues 3 to 34 fold into a zinc finger; sequence CPFCAANDTKVIDSRLVAEGDQVRRRRECVAC. Residues 49–139 enclose the ATP-cone domain; that stretch reads PRLIKQDGSR…VYRRFQDLNE (91 aa).

The protein belongs to the NrdR family. Zn(2+) is required as a cofactor.

Its function is as follows. Negatively regulates transcription of bacterial ribonucleotide reductase nrd genes and operons by binding to NrdR-boxes. The polypeptide is Transcriptional repressor NrdR (Ectopseudomonas mendocina (strain ymp) (Pseudomonas mendocina)).